A 308-amino-acid polypeptide reads, in one-letter code: Limonin dehydrogenase (308 aa).

It belongs to the aldehyde dehydrogenase family.

It localises to the periplasm. Its activity is regulated as follows. Completely inhibited by HgCl(2), CoCl(2) and CaCl(2). Catalyzes the NAD(+)-dependent conversion of limonin. The sequence is that of Limonin dehydrogenase from Pseudomonas putida (Arthrobacter siderocapsulatus).